A 291-amino-acid polypeptide reads, in one-letter code: Protease HtpX (291 aa).

A run of 2 helical transmembrane segments spans residues 4-24 (IILFLLTNLAVVCVFGFILSF) and 32-52 (ISGLLIFSSIFGFSGSIISLL). Position 139 (H139) interacts with Zn(2+). Residue E140 is part of the active site. H143 provides a ligand contact to Zn(2+). Transmembrane regions (helical) follow at residues 158–178 (IVNTFVIFISRIIAQFASSIL) and 192–212 (WVYIICSTILELIFGIFASII). E221 is a Zn(2+) binding site.

Belongs to the peptidase M48B family. The cofactor is Zn(2+).

The protein resides in the cell membrane. This is Protease HtpX from Buchnera aphidicola subsp. Baizongia pistaciae (strain Bp).